Reading from the N-terminus, the 638-residue chain is DNA mismatch repair protein MutL (638 aa).

The disordered stretch occupies residues 404 to 433 (FGTQTNAFGSMATPRDNSRGNYSAGESRQR).

This sequence belongs to the DNA mismatch repair MutL/HexB family.

Functionally, this protein is involved in the repair of mismatches in DNA. It is required for dam-dependent methyl-directed DNA mismatch repair. May act as a 'molecular matchmaker', a protein that promotes the formation of a stable complex between two or more DNA-binding proteins in an ATP-dependent manner without itself being part of a final effector complex. This Shewanella baltica (strain OS195) protein is DNA mismatch repair protein MutL.